The primary structure comprises 121 residues: Putative SNURF-like protein (121 aa).

The protein belongs to the SNURF family.

In Homo sapiens (Human), this protein is Putative SNURF-like protein (SNURFL).